A 165-amino-acid chain; its full sequence is E3 ubiquitin-protein ligase RNF181 (165 aa).

The RING-type; atypical zinc finger occupies 88–129; sequence CPVCLLEFEAEETVIEMPCHHLFHSNCILPWLSKTNSCPLCR. The tract at residues 136–165 is disordered; the sequence is DDSYEEHKKDKARRQQQQHRLENLHGAMYT. Thr165 carries the post-translational modification Phosphothreonine.

It belongs to the RNF181 family. As to quaternary structure, directly interacts with ITGA2B and, as a result, with integrin ITGA2B/ITGB3. There is no evidence that integrin ITGA2B/ITGB3 is an endogenous substrate for RNF181-directed ubiquitination. Auto-ubiquitinated as part of the enzymatic reaction.

It carries out the reaction S-ubiquitinyl-[E2 ubiquitin-conjugating enzyme]-L-cysteine + [acceptor protein]-L-lysine = [E2 ubiquitin-conjugating enzyme]-L-cysteine + N(6)-ubiquitinyl-[acceptor protein]-L-lysine.. Its pathway is protein modification; protein ubiquitination. E3 ubiquitin-protein ligase which accepts ubiquitin from an E2 ubiquitin-conjugating enzyme in the form of a thioester and then directly transfers the ubiquitin to targeted substrates. Catalyzes monoubiquitination of 26S proteasome subunit PSMC2/RPT1. The polypeptide is E3 ubiquitin-protein ligase RNF181 (Mus musculus (Mouse)).